Consider the following 311-residue polypeptide: Pyrimidine-specific ribonucleoside hydrolase RihA (311 aa).

His-240 is a catalytic residue.

It belongs to the IUNH family. RihA subfamily.

Its function is as follows. Hydrolyzes with equal efficiency cytidine or uridine to ribose and cytosine or uracil, respectively. The protein is Pyrimidine-specific ribonucleoside hydrolase RihA of Escherichia coli O127:H6 (strain E2348/69 / EPEC).